The sequence spans 252 residues: Protein HEAT-INDUCED TAS1 TARGET 2 (252 aa).

This sequence belongs to the heat induced plant HTT protein family. As to expression, expressed ubiquitously, including in seedlings, leaves, stems, inflorescences and siliques.

It localises to the cytoplasm. The protein resides in the nucleus. Functionally, mediates both basal and acquired thermotolerance via HSFA1s-directed pathways (e.g. HSFA1A, HSFA1B, and HSFA1D). Triggers the expression of HSFA1A and HSFA1B. This Arabidopsis thaliana (Mouse-ear cress) protein is Protein HEAT-INDUCED TAS1 TARGET 2.